We begin with the raw amino-acid sequence, 182 residues long: Adenylate kinase (182 aa).

Gly-12 to Thr-17 contacts ATP. Positions Ser-32–Val-61 are NMP. AMP-binding positions include Thr-33, Arg-38, Glu-59–Val-61, Gly-85–Arg-88, and Gln-92. Positions Leu-126–Asp-132 are LID. Residue Arg-127 coordinates ATP. Residues Arg-129 and Arg-140 each coordinate AMP. Arg-168 serves as a coordination point for ATP.

It belongs to the adenylate kinase family. In terms of assembly, monomer.

It is found in the cytoplasm. The catalysed reaction is AMP + ATP = 2 ADP. It participates in purine metabolism; AMP biosynthesis via salvage pathway; AMP from ADP: step 1/1. In terms of biological role, catalyzes the reversible transfer of the terminal phosphate group between ATP and AMP. Plays an important role in cellular energy homeostasis and in adenine nucleotide metabolism. This chain is Adenylate kinase, found in Prochlorococcus marinus (strain MIT 9301).